The primary structure comprises 411 residues: Tyrosine--tRNA ligase (411 aa).

The short motif at 48-57 (PTAPDIHLGH) is the 'HIGH' region element. Residues 232–236 (KMSKS) carry the 'KMSKS' region motif. Lysine 235 contributes to the ATP binding site. In terms of domain architecture, S4 RNA-binding spans 347–409 (VLLPKVLFSA…GKRRFLKIIF (63 aa)).

This sequence belongs to the class-I aminoacyl-tRNA synthetase family. TyrS type 2 subfamily. Homodimer.

It localises to the cytoplasm. The enzyme catalyses tRNA(Tyr) + L-tyrosine + ATP = L-tyrosyl-tRNA(Tyr) + AMP + diphosphate + H(+). Its function is as follows. Catalyzes the attachment of tyrosine to tRNA(Tyr) in a two-step reaction: tyrosine is first activated by ATP to form Tyr-AMP and then transferred to the acceptor end of tRNA(Tyr). In Carboxydothermus hydrogenoformans (strain ATCC BAA-161 / DSM 6008 / Z-2901), this protein is Tyrosine--tRNA ligase.